The following is a 304-amino-acid chain: Acetyl-coenzyme A carboxylase carboxyl transferase subunit beta (304 aa).

The CoA carboxyltransferase N-terminal domain maps to 23 to 292 (VWTKCDSCGQ…PNPEAPREGV (270 aa)). The Zn(2+) site is built by Cys-27, Cys-30, Cys-46, and Cys-49. The segment at 27-49 (CDSCGQVLYRAELERNLEVCPKC) adopts a C4-type zinc-finger fold. Residues 284–304 (NPEAPREGVVVPPVPDQEPEA) are disordered. The span at 295-304 (PPVPDQEPEA) shows a compositional bias: pro residues.

This sequence belongs to the AccD/PCCB family. Acetyl-CoA carboxylase is a heterohexamer composed of biotin carboxyl carrier protein (AccB), biotin carboxylase (AccC) and two subunits each of ACCase subunit alpha (AccA) and ACCase subunit beta (AccD). Requires Zn(2+) as cofactor.

It localises to the cytoplasm. The enzyme catalyses N(6)-carboxybiotinyl-L-lysyl-[protein] + acetyl-CoA = N(6)-biotinyl-L-lysyl-[protein] + malonyl-CoA. The protein operates within lipid metabolism; malonyl-CoA biosynthesis; malonyl-CoA from acetyl-CoA: step 1/1. Component of the acetyl coenzyme A carboxylase (ACC) complex. Biotin carboxylase (BC) catalyzes the carboxylation of biotin on its carrier protein (BCCP) and then the CO(2) group is transferred by the transcarboxylase to acetyl-CoA to form malonyl-CoA. The protein is Acetyl-coenzyme A carboxylase carboxyl transferase subunit beta of Shigella flexneri serotype 5b (strain 8401).